The chain runs to 608 residues: UvrABC system protein C (608 aa).

Positions 15 to 93 constitute a GIY-YIG domain; it reads HQPGVYRMYN…IKQYLPKYNV (79 aa). A UVR domain is found at 203 to 238; that stretch reads RQVIQTLVKQMESASQSLNFEKAAIIRDQIQAMRRV.

The protein belongs to the UvrC family. In terms of assembly, interacts with UvrB in an incision complex.

The protein localises to the cytoplasm. Functionally, the UvrABC repair system catalyzes the recognition and processing of DNA lesions. UvrC both incises the 5' and 3' sides of the lesion. The N-terminal half is responsible for the 3' incision and the C-terminal half is responsible for the 5' incision. The sequence is that of UvrABC system protein C from Aliivibrio fischeri (strain ATCC 700601 / ES114) (Vibrio fischeri).